Reading from the N-terminus, the 253-residue chain is MGTILDKIVEQKKKEVAELYETYTPVKTKRKTHSLVEALQQFTVIAEVKRASPSKGDINLHVDVRKQVGTYEDCGAGAVSVLTDGQFFKGSFHDLQTAREESNIPLLCKDFIIDKIQIDRAYETGADIILLIVAALTKEKLKELYSYVLEKGLEAIVEVHDEQELETAIQLNPHVIGINNRNLKTFEVDLSQTEKLGKRLNEEKLLWISESGIHSKEDITRVKRAGAKGVLVGEALMTSSSISSFFEDCKVNI.

Belongs to the TrpC family.

It catalyses the reaction 1-(2-carboxyphenylamino)-1-deoxy-D-ribulose 5-phosphate + H(+) = (1S,2R)-1-C-(indol-3-yl)glycerol 3-phosphate + CO2 + H2O. The protein operates within amino-acid biosynthesis; L-tryptophan biosynthesis; L-tryptophan from chorismate: step 4/5. The polypeptide is Indole-3-glycerol phosphate synthase (Bacillus cereus (strain G9842)).